The chain runs to 324 residues: Glyoxylate/hydroxypyruvate reductase B (324 aa).

Catalysis depends on residues Arg237 and Glu266. His285 serves as the catalytic Proton donor.

This sequence belongs to the D-isomer specific 2-hydroxyacid dehydrogenase family. GhrB subfamily. Homodimer.

The protein resides in the cytoplasm. It carries out the reaction glycolate + NADP(+) = glyoxylate + NADPH + H(+). It catalyses the reaction (R)-glycerate + NAD(+) = 3-hydroxypyruvate + NADH + H(+). The catalysed reaction is (R)-glycerate + NADP(+) = 3-hydroxypyruvate + NADPH + H(+). In terms of biological role, catalyzes the NADPH-dependent reduction of glyoxylate and hydroxypyruvate into glycolate and glycerate, respectively. This is Glyoxylate/hydroxypyruvate reductase B from Escherichia coli O9:H4 (strain HS).